Reading from the N-terminus, the 108-residue chain is Small ribosomal subunit protein eS25y (108 aa).

The disordered stretch occupies residues 1–36 (MAPKKDKVPPPSSKPAKSGGGKQKKKKWSKGKQKEK). Residues 22-31 (KQKKKKWSKG) are compositionally biased toward basic residues.

The protein belongs to the eukaryotic ribosomal protein eS25 family.

This is Small ribosomal subunit protein eS25y (RPS25B) from Arabidopsis thaliana (Mouse-ear cress).